A 222-amino-acid polypeptide reads, in one-letter code: Kinetochore protein Spc25 (222 aa).

Positions Arg-51–Ala-86 form a coiled coil.

Belongs to the SPC25 family. As to quaternary structure, component of the Ndc80 complex, which is composed of Ndc80, Nuf2 and Spc25.

Its subcellular location is the nucleus. The protein localises to the chromosome. It is found in the centromere. It localises to the kinetochore. Acts as a component of the essential kinetochore-associated Ndc80 complex, which is required for chromosome segregation and spindle checkpoint activity during meiosis and mitosis. Required for kinetochore integrity and the organization of stable microtubule binding sites in the outer plate of the kinetochore. Participates in SAC signaling that responds specifically to disruptions in spindle microtubule dynamics. The NDC80 complex synergistically enhances the affinity of the SKA1 complex for microtubules and may allow the NDC80 complex to track depolymerizing microtubules. The protein is Kinetochore protein Spc25 of Drosophila mauritiana (Fruit fly).